A 222-amino-acid chain; its full sequence is Glutathione S-transferase U21 (222 aa).

The region spanning 3–83 (AEVILLGFWP…YIDEVWSDNN (81 aa)) is the GST N-terminal domain. Residues 13–14 (SM), 40–41 (NK), 54–55 (TI), and 67–68 (ES) contribute to the glutathione site. The region spanning 89–211 (DPYHRAQALF…LPDSEKVVGY (123 aa)) is the GST C-terminal domain.

The protein belongs to the GST superfamily. Tau family.

The protein resides in the cytoplasm. The protein localises to the cytosol. The catalysed reaction is RX + glutathione = an S-substituted glutathione + a halide anion + H(+). Its function is as follows. May be involved in the conjugation of reduced glutathione to a wide number of exogenous and endogenous hydrophobic electrophiles and have a detoxification role against certain herbicides. This Arabidopsis thaliana (Mouse-ear cress) protein is Glutathione S-transferase U21 (GSTU21).